Consider the following 242-residue polypeptide: TGACG-sequence-specific DNA-binding protein TGA-1B (242 aa).

The tract at residues 1–125 (EFCDFSGNQA…HSSPNFENNS (125 aa)) is disordered. Over residues 18-45 (DTSSPELRQSSSGSDVLNATSSTSSHQV) the composition is skewed to polar residues. The segment covering 66-79 (EGSRESANDNKGLG) has biased composition (basic and acidic residues). The span at 88-125 (SPESQGSGNYGSNVSEGLNYPSDSNKSVHSSPNFENNS) shows a compositional bias: polar residues. A bZIP domain is found at 183 to 242 (DEKKRARLVRNRESAQLSRQRKKHYVEELEDKVRIMHSTIQDLNAKVAYIIAENATLKTQ). Residues 185-216 (KKRARLVRNRESAQLSRQRKKHYVEELEDKVR) are basic motif. A leucine-zipper region spans residues 225–239 (LNAKVAYIIAENATL).

This sequence belongs to the bZIP family.

The protein localises to the nucleus. In terms of biological role, binds specifically to the DNA sequence 5'-TGACG-3'. In Nicotiana tabacum (Common tobacco), this protein is TGACG-sequence-specific DNA-binding protein TGA-1B (TGA1B).